A 626-amino-acid polypeptide reads, in one-letter code: Lipid-A-disaccharide synthase (626 aa).

A unknown region spans residues Met-1 to His-225. Residues Ser-226–Ala-626 form a lipid-A-disaccharide synthase region.

The protein in the C-terminal section; belongs to the LpxB family.

The enzyme catalyses a lipid X + a UDP-2-N,3-O-bis[(3R)-3-hydroxyacyl]-alpha-D-glucosamine = a lipid A disaccharide + UDP + H(+). It functions in the pathway bacterial outer membrane biogenesis; LPS lipid A biosynthesis. Functionally, condensation of UDP-2,3-diacylglucosamine and 2,3-diacylglucosamine-1-phosphate to form lipid A disaccharide, a precursor of lipid A, a phosphorylated glycolipid that anchors the lipopolysaccharide to the outer membrane of the cell. This is Lipid-A-disaccharide synthase (lpxB) from Chlamydia caviae (strain ATCC VR-813 / DSM 19441 / 03DC25 / GPIC) (Chlamydophila caviae).